Consider the following 171-residue polypeptide: Lipoprotein signal peptidase (171 aa).

3 helical membrane-spanning segments follow: residues 12-32 (WYWV…WVLA), 67-87 (WQRW…TVWL), and 93-113 (SLLK…GNLV). Catalysis depends on residues aspartate 123 and aspartate 141. The chain crosses the membrane as a helical span at residues 137–157 (FNIADSAICIGAVLIIWDAFL).

The protein belongs to the peptidase A8 family.

It is found in the cell inner membrane. It catalyses the reaction Release of signal peptides from bacterial membrane prolipoproteins. Hydrolyzes -Xaa-Yaa-Zaa-|-(S,diacylglyceryl)Cys-, in which Xaa is hydrophobic (preferably Leu), and Yaa (Ala or Ser) and Zaa (Gly or Ala) have small, neutral side chains.. It participates in protein modification; lipoprotein biosynthesis (signal peptide cleavage). In terms of biological role, this protein specifically catalyzes the removal of signal peptides from prolipoproteins. The protein is Lipoprotein signal peptidase of Shewanella baltica (strain OS223).